We begin with the raw amino-acid sequence, 330 residues long: tRNA U34 carboxymethyltransferase (330 aa).

Carboxy-S-adenosyl-L-methionine contacts are provided by residues K91, W105, K110, G130, 152–154 (DPS), 181–182 (IE), M196, Y200, and R315.

Belongs to the class I-like SAM-binding methyltransferase superfamily. CmoB family. In terms of assembly, homotetramer.

It catalyses the reaction carboxy-S-adenosyl-L-methionine + 5-hydroxyuridine(34) in tRNA = 5-carboxymethoxyuridine(34) in tRNA + S-adenosyl-L-homocysteine + H(+). Catalyzes carboxymethyl transfer from carboxy-S-adenosyl-L-methionine (Cx-SAM) to 5-hydroxyuridine (ho5U) to form 5-carboxymethoxyuridine (cmo5U) at position 34 in tRNAs. The polypeptide is tRNA U34 carboxymethyltransferase (Shewanella halifaxensis (strain HAW-EB4)).